We begin with the raw amino-acid sequence, 417 residues long: Serine--tRNA ligase (417 aa).

L-serine is bound at residue 226–228; it reads TSE. ATP is bound by residues 257–259 and Val-273; that span reads RRE. An L-serine-binding site is contributed by Glu-280. 344–347 lines the ATP pocket; it reads EVTS. Residue Thr-379 participates in L-serine binding.

This sequence belongs to the class-II aminoacyl-tRNA synthetase family. Type-1 seryl-tRNA synthetase subfamily. Homodimer. The tRNA molecule binds across the dimer.

The protein localises to the cytoplasm. It carries out the reaction tRNA(Ser) + L-serine + ATP = L-seryl-tRNA(Ser) + AMP + diphosphate + H(+). It catalyses the reaction tRNA(Sec) + L-serine + ATP = L-seryl-tRNA(Sec) + AMP + diphosphate + H(+). It participates in aminoacyl-tRNA biosynthesis; selenocysteinyl-tRNA(Sec) biosynthesis; L-seryl-tRNA(Sec) from L-serine and tRNA(Sec): step 1/1. Its function is as follows. Catalyzes the attachment of serine to tRNA(Ser). Is also able to aminoacylate tRNA(Sec) with serine, to form the misacylated tRNA L-seryl-tRNA(Sec), which will be further converted into selenocysteinyl-tRNA(Sec). The sequence is that of Serine--tRNA ligase from Tropheryma whipplei (strain Twist) (Whipple's bacillus).